Reading from the N-terminus, the 204-residue chain is Pyrrolidone-carboxylate peptidase (204 aa).

Residues glutamate 78, cysteine 141, and histidine 165 contribute to the active site.

This sequence belongs to the peptidase C15 family. As to quaternary structure, homotetramer.

The protein localises to the cytoplasm. It catalyses the reaction Release of an N-terminal pyroglutamyl group from a polypeptide, the second amino acid generally not being Pro.. Removes 5-oxoproline from various penultimate amino acid residues except L-proline. The chain is Pyrrolidone-carboxylate peptidase from Levilactobacillus brevis (strain ATCC 367 / BCRC 12310 / CIP 105137 / JCM 1170 / LMG 11437 / NCIMB 947 / NCTC 947) (Lactobacillus brevis).